We begin with the raw amino-acid sequence, 488 residues long: Ammonium transporter 1 member 1 (488 aa).

The next 11 membrane-spanning stretches (helical) occupy residues 47–69 (TYLLFSAYLVFSMQLGFAMLLAG), 90–109 (LFYYLFGFAFALGGPSNGFI), 129–148 (FLYQWAFAIAAAGITSGSIA), 153–175 (FVAYLIYSSFLTGFVYPVVSHWF), 195–217 (VIDFAGSGVVHMVGGIAGFYGAL), 238–257 (HSASLVVLGTFLLWFGWYGF), 281–303 (AVGRTAVTTTLAGCTAALTTLFG), 316–333 (VCNGLLGGFAAITAGCSV), 337–356 (WAAIICGFVAALVLIGFNML), 368–387 (AAQLHGGCGAWGIIFTGLFA), and 418–440 (HIIQILVIIGWVSATMGPLFYIL).

The protein belongs to the ammonia transporter channel (TC 1.A.11.2) family. As to expression, root hairs and leaves.

The protein resides in the membrane. Ammonium transporter that may be involved in ammonium uptake from the soil. The polypeptide is Ammonium transporter 1 member 1 (AMT1-1) (Solanum lycopersicum (Tomato)).